Reading from the N-terminus, the 360-residue chain is 45 kDa calcium-binding protein (360 aa).

A signal peptide spans 1-29 (MVSKQAFLFSLGSLYLSLLFIFLLMDVYA). An N-linked (GlcNAc...) asparagine glycan is attached at asparagine 33. EF-hand domains follow at residues 96-131 (RNRR…KTEE), 135-170 (EAVN…SKGF), 231-266 (MLKF…TVEN), 276-311 (WVRD…MNEY), and 312-347 (NALN…FTGS). Ca(2+) is bound by residues aspartate 109, asparagine 111, aspartate 113, glutamine 115, glutamate 120, aspartate 148, aspartate 150, aspartate 152, histidine 154, glutamate 159, aspartate 244, aspartate 246, aspartate 248, lysine 250, glutamate 255, aspartate 289, asparagine 291, aspartate 293, glutamate 300, aspartate 325, asparagine 327, aspartate 329, and glutamate 336.

Belongs to the CREC family.

The protein localises to the golgi apparatus lumen. Functionally, may regulate calcium-dependent activities in the endoplasmic reticulum lumen or post-ER compartment. This Xenopus laevis (African clawed frog) protein is 45 kDa calcium-binding protein (sdf4).